Here is a 384-residue protein sequence, read N- to C-terminus: MAKVDFYEVLGVSKGASAEEIKKAYRSKAKELHPDRNQGQSAAEAQFKEVNGAYDVLKDGDKKAAYDRYGHAAFEGGMGGGGPRGPYGQGADFSSAFSDVFEDLFGDFMGGRGGPGGGGRRVRRRGSDLRYNMRVTLEEAFKGAQKTITVPGSAACGSCNGTGAEGGAEPQTCPTCSGLGKVRAQNGFFTVERTCPTCGGQGQVVKNPCRVCHGSGRIEKERTLSVNIPAGVETGTRIRLAGEGEAGMRGGPSGDLYIFIEVREHAIFQRDGVNLFCRVPVSMVSAALGGEVEVPTIDGGRSKVKVPVGSQSGRQMRLRGKGMPALRGGGIGDMVIELAVETPVNLTARQKELLDEFQRIQAENNPEGASFFQKVKSFWDGMKG.

The region spanning D5–G70 is the J domain. The segment at G143–E221 adopts a CR-type zinc-finger fold. Positions 156, 159, 173, 176, 195, 198, 209, and 212 each coordinate Zn(2+). 4 CXXCXGXG motif repeats span residues C156–G163, C173–G180, C195–G202, and C209–G216.

Belongs to the DnaJ family. As to quaternary structure, homodimer. Zn(2+) is required as a cofactor.

Its subcellular location is the cytoplasm. Participates actively in the response to hyperosmotic and heat shock by preventing the aggregation of stress-denatured proteins and by disaggregating proteins, also in an autonomous, DnaK-independent fashion. Unfolded proteins bind initially to DnaJ; upon interaction with the DnaJ-bound protein, DnaK hydrolyzes its bound ATP, resulting in the formation of a stable complex. GrpE releases ADP from DnaK; ATP binding to DnaK triggers the release of the substrate protein, thus completing the reaction cycle. Several rounds of ATP-dependent interactions between DnaJ, DnaK and GrpE are required for fully efficient folding. Also involved, together with DnaK and GrpE, in the DNA replication of plasmids through activation of initiation proteins. This is Chaperone protein DnaJ from Rhodobacter capsulatus (Rhodopseudomonas capsulata).